A 178-amino-acid chain; its full sequence is Anthranilate synthase component 2 (178 aa).

Residues Met-1–Gly-178 form the Glutamine amidotransferase type-1 domain. Gly-49 to Gly-51 lines the L-glutamine pocket. Cys-71 functions as the Nucleophile; for GATase activity in the catalytic mechanism. Residues Gln-75 and Ser-120–Leu-121 each bind L-glutamine. Catalysis depends on for GATase activity residues His-155 and Glu-157.

In terms of assembly, heterotetramer consisting of two non-identical subunits: a beta subunit (TrpG) and a large alpha subunit (TrpE).

It catalyses the reaction chorismate + L-glutamine = anthranilate + pyruvate + L-glutamate + H(+). It functions in the pathway amino-acid biosynthesis; L-tryptophan biosynthesis; L-tryptophan from chorismate: step 1/5. Its function is as follows. Part of a heterotetrameric complex that catalyzes the two-step biosynthesis of anthranilate, an intermediate in the biosynthesis of L-tryptophan. In the first step, the glutamine-binding beta subunit (TrpG) of anthranilate synthase (AS) provides the glutamine amidotransferase activity which generates ammonia as a substrate that, along with chorismate, is used in the second step, catalyzed by the large alpha subunit of AS (TrpE) to produce anthranilate. In the absence of TrpG, TrpE can synthesize anthranilate directly from chorismate and high concentrations of ammonia. This is Anthranilate synthase component 2 (trpG) from Archaeoglobus fulgidus (strain ATCC 49558 / DSM 4304 / JCM 9628 / NBRC 100126 / VC-16).